Consider the following 557-residue polypeptide: Hdr-like menaquinol oxidoreductase iron-sulfur subunit (557 aa).

2 4Fe-4S ferredoxin-type domains span residues 86 to 115 (RAFK…GDPK) and 155 to 184 (KEWY…AEVV). Positions 95, 98, 101, 105, 164, 167, 170, and 174 each coordinate [4Fe-4S] cluster.

[4Fe-4S] cluster serves as cofactor.

It is found in the membrane. Functionally, has menaquinol-oxidizing activity. The HmeC and HmeD subunits may together mediate electron transfer from menaquinol to an unidentified electron acceptor on the cytoplasmic side of the membrane. This is Hdr-like menaquinol oxidoreductase iron-sulfur subunit (hmeD) from Archaeoglobus profundus (strain DSM 5631 / JCM 9629 / NBRC 100127 / Av18).